The following is a 615-amino-acid chain: Elongation factor 4 (615 aa).

In terms of domain architecture, tr-type G spans A14 to T200. GTP-binding positions include D26 to T31 and N147 to D150.

This sequence belongs to the TRAFAC class translation factor GTPase superfamily. Classic translation factor GTPase family. LepA subfamily.

The protein resides in the cell membrane. The catalysed reaction is GTP + H2O = GDP + phosphate + H(+). Required for accurate and efficient protein synthesis under certain stress conditions. May act as a fidelity factor of the translation reaction, by catalyzing a one-codon backward translocation of tRNAs on improperly translocated ribosomes. Back-translocation proceeds from a post-translocation (POST) complex to a pre-translocation (PRE) complex, thus giving elongation factor G a second chance to translocate the tRNAs correctly. Binds to ribosomes in a GTP-dependent manner. The protein is Elongation factor 4 of Corynebacterium glutamicum (strain ATCC 13032 / DSM 20300 / JCM 1318 / BCRC 11384 / CCUG 27702 / LMG 3730 / NBRC 12168 / NCIMB 10025 / NRRL B-2784 / 534).